Reading from the N-terminus, the 474-residue chain is Bifunctional protein HldE (474 aa).

Positions 1–318 (MKVTLPDFNK…ENAIRGRADN (318 aa)) are ribokinase. An ATP-binding site is contributed by 195 to 198 (NMSE). Residue Asp-264 is part of the active site. The cytidylyltransferase stretch occupies residues 344–474 (MTNGCFDILH…TNIINAIKKK (131 aa)).

The protein in the N-terminal section; belongs to the carbohydrate kinase PfkB family. It in the C-terminal section; belongs to the cytidylyltransferase family. Homodimer.

The catalysed reaction is D-glycero-beta-D-manno-heptose 7-phosphate + ATP = D-glycero-beta-D-manno-heptose 1,7-bisphosphate + ADP + H(+). It catalyses the reaction D-glycero-beta-D-manno-heptose 1-phosphate + ATP + H(+) = ADP-D-glycero-beta-D-manno-heptose + diphosphate. It functions in the pathway nucleotide-sugar biosynthesis; ADP-L-glycero-beta-D-manno-heptose biosynthesis; ADP-L-glycero-beta-D-manno-heptose from D-glycero-beta-D-manno-heptose 7-phosphate: step 1/4. The protein operates within nucleotide-sugar biosynthesis; ADP-L-glycero-beta-D-manno-heptose biosynthesis; ADP-L-glycero-beta-D-manno-heptose from D-glycero-beta-D-manno-heptose 7-phosphate: step 3/4. Catalyzes the phosphorylation of D-glycero-D-manno-heptose 7-phosphate at the C-1 position to selectively form D-glycero-beta-D-manno-heptose-1,7-bisphosphate. Its function is as follows. Catalyzes the ADP transfer from ATP to D-glycero-beta-D-manno-heptose 1-phosphate, yielding ADP-D-glycero-beta-D-manno-heptose. In Proteus mirabilis (strain HI4320), this protein is Bifunctional protein HldE.